We begin with the raw amino-acid sequence, 445 residues long: Argininosuccinate synthase (445 aa).

ATP is bound by residues 17–25 (AFSGGLDTS) and A43. Y99 contacts L-citrulline. G129 and T131 together coordinate ATP. The L-aspartate site is built by T131, N135, and D136. N135 contributes to the L-citrulline binding site. Residue D136 participates in ATP binding. 2 residues coordinate L-citrulline: R139 and S192. D194 contacts ATP. L-citrulline-binding residues include T201, E203, and E280.

The protein belongs to the argininosuccinate synthase family. Type 2 subfamily. As to quaternary structure, homotetramer.

It is found in the cytoplasm. The enzyme catalyses L-citrulline + L-aspartate + ATP = 2-(N(omega)-L-arginino)succinate + AMP + diphosphate + H(+). It participates in amino-acid biosynthesis; L-arginine biosynthesis; L-arginine from L-ornithine and carbamoyl phosphate: step 2/3. In Ralstonia nicotianae (strain ATCC BAA-1114 / GMI1000) (Ralstonia solanacearum), this protein is Argininosuccinate synthase (argG).